The primary structure comprises 696 residues: Methionine--tRNA ligase (696 aa).

Positions 12-22 (PYANGAIHLGH) match the 'HIGH' region motif. Zn(2+) contacts are provided by cysteine 143, cysteine 146, cysteine 156, and cysteine 159. The 'KMSKS' region motif lies at 336-340 (KMSKS). Position 339 (lysine 339) interacts with ATP. The disordered stretch occupies residues 556 to 580 (SLAPAPEAQSQQRHAEHQQNEVTAE). The region spanning 591 to 696 (DFMKVDLRIV…SGAQPGMRVK (106 aa)) is the tRNA-binding domain.

The protein belongs to the class-I aminoacyl-tRNA synthetase family. MetG type 1 subfamily. In terms of assembly, homodimer. It depends on Zn(2+) as a cofactor.

It localises to the cytoplasm. It catalyses the reaction tRNA(Met) + L-methionine + ATP = L-methionyl-tRNA(Met) + AMP + diphosphate. Is required not only for elongation of protein synthesis but also for the initiation of all mRNA translation through initiator tRNA(fMet) aminoacylation. The polypeptide is Methionine--tRNA ligase (Dechloromonas aromatica (strain RCB)).